We begin with the raw amino-acid sequence, 198 residues long: A-type ATP synthase subunit E (198 aa).

It belongs to the V-ATPase E subunit family. As to quaternary structure, has multiple subunits with at least A(3), B(3), C, D, E, F, H, I and proteolipid K(x).

The protein resides in the cell membrane. Its function is as follows. Component of the A-type ATP synthase that produces ATP from ADP in the presence of a proton gradient across the membrane. The protein is A-type ATP synthase subunit E of Pyrococcus furiosus (strain ATCC 43587 / DSM 3638 / JCM 8422 / Vc1).